Here is a 253-residue protein sequence, read N- to C-terminus: Chloride intracellular channel protein 4 (253 aa).

At A2 the chain carries N-acetylalanine. Positions 2–101 are required for insertion into the membrane; sequence ALSMPLNGLK…EEFLEEVLCP (100 aa). S4 is subject to Phosphoserine. Position 24 is an N6-acetyllysine (K24). The G-site signature appears at 35–38; it reads CPFS. Residues 37 to 57 form a helical membrane-spanning segment; sequence FSQRLFMILWLKGVVFSVTTV. The region spanning 81-244 is the GST C-terminal domain; it reads NSEVKTDVNK…PSDKEVEIAY (164 aa). N6-acetyllysine is present on K130. A phosphoserine mark is found at S132, S167, and S236. Y244 carries the post-translational modification Phosphotyrosine.

The protein belongs to the chloride channel CLIC family. As to quaternary structure, monomer. Interacts with HRH3. In terms of tissue distribution, detected in brain, in cell bodies and dendrites of Purkinje cells in cerebellar neurons (at protein level). Expressed neonatal and adult cardiomyocytes (at protein level). Marked expression was found in hippocampus and cerebellum, and in many other tissues.

The protein resides in the cytoplasm. It is found in the cytoskeleton. It localises to the microtubule organizing center. The protein localises to the centrosome. Its subcellular location is the cytoplasmic vesicle membrane. The protein resides in the nucleus. It is found in the cell membrane. It localises to the mitochondrion. The protein localises to the cell junction. Its subcellular location is the endoplasmic reticulum membrane. The catalysed reaction is chloride(in) = chloride(out). It catalyses the reaction thiocyanate(in) = thiocyanate(out). The enzyme catalyses nitrate(in) = nitrate(out). It carries out the reaction iodide(out) = iodide(in). The catalysed reaction is bromide(in) = bromide(out). It catalyses the reaction fluoride(in) = fluoride(out). The enzyme catalyses choline(out) = choline(in). Channel activity is redox- and pH-regulated. Anion vs cation selectivity is enhanced when fully oxidized. In terms of biological role, in the soluble state, catalyzes glutaredoxin-like thiol disulfide exchange reactions with reduced glutathione as electron donor. Can insert into membranes and form voltage-dependent multi-ion conductive channels. Membrane insertion seems to be redox-regulated and may occur only under oxidizing conditions. Has alternate cellular functions like a potential role in angiogenesis or in maintaining apical-basolateral membrane polarity during mitosis and cytokinesis. Could also promote endothelial cell proliferation and regulate endothelial morphogenesis (tubulogenesis). Promotes cell-surface expression of HRH3. The chain is Chloride intracellular channel protein 4 (Clic4) from Rattus norvegicus (Rat).